The chain runs to 348 residues: Dihydroorotase (348 aa).

Zn(2+) contacts are provided by H17 and H19. Residues 19–21 (HLR) and N45 contribute to the substrate site. Residues K103, H140, and H178 each contribute to the Zn(2+) site. An N6-carboxylysine modification is found at K103. H140 lines the substrate pocket. L223 contributes to the substrate binding site. D251 contributes to the Zn(2+) binding site. Residue D251 is part of the active site. 2 residues coordinate substrate: H255 and A267.

Belongs to the metallo-dependent hydrolases superfamily. DHOase family. Class II DHOase subfamily. In terms of assembly, homodimer. The cofactor is Zn(2+).

It carries out the reaction (S)-dihydroorotate + H2O = N-carbamoyl-L-aspartate + H(+). Its pathway is pyrimidine metabolism; UMP biosynthesis via de novo pathway; (S)-dihydroorotate from bicarbonate: step 3/3. Functionally, catalyzes the reversible cyclization of carbamoyl aspartate to dihydroorotate. This is Dihydroorotase from Escherichia coli O7:K1 (strain IAI39 / ExPEC).